An 83-amino-acid polypeptide reads, in one-letter code: U20-theraphotoxin-Cg1a 2 (83 aa).

Residues 1 to 21 (MQVSVLITLAVLGVMFVWTSA) form the signal peptide. Positions 22–47 (AELEERGSDQPAWLKSLERIFQSEER) are excised as a propeptide. Cystine bridges form between cysteine 49–cysteine 63, cysteine 56–cysteine 68, and cysteine 62–cysteine 76.

The protein belongs to the neurotoxin 10 (Hwtx-1) family. 40 (Jztx-35) subfamily. Expressed by the venom gland.

It is found in the secreted. Its function is as follows. Probable ion channel inhibitor. This chain is U20-theraphotoxin-Cg1a 2, found in Chilobrachys guangxiensis (Chinese earth tiger tarantula).